The chain runs to 308 residues: tRNA dimethylallyltransferase (308 aa).

8–15 (GATAVGKT) contacts ATP. Residue 10–15 (TAVGKT) coordinates substrate. Residues 33 to 36 (DSRQ) form an interaction with substrate tRNA region.

It belongs to the IPP transferase family. In terms of assembly, monomer. The cofactor is Mg(2+).

It carries out the reaction adenosine(37) in tRNA + dimethylallyl diphosphate = N(6)-dimethylallyladenosine(37) in tRNA + diphosphate. In terms of biological role, catalyzes the transfer of a dimethylallyl group onto the adenine at position 37 in tRNAs that read codons beginning with uridine, leading to the formation of N6-(dimethylallyl)adenosine (i(6)A). The chain is tRNA dimethylallyltransferase from Kosmotoga olearia (strain ATCC BAA-1733 / DSM 21960 / TBF 19.5.1).